The chain runs to 638 residues: Meiosis initiator protein (638 aa).

5 disordered regions span residues 1-21, 60-79, 138-249, 404-433, and 447-537; these read MFGS…SLGP, NQRN…KNHT, LAGL…KGGQ, PSAY…SLHR, and GNSK…PCPP. The span at 7 to 20 shows a compositional bias: polar residues; that stretch reads YLGSSEQPRANSLG. The basic motif; degenerate stretch occupies residues 62 to 75; it reads RNQNKLLSPNKKQR. In terms of domain architecture, bHLH spans 62 to 116; it reads RNQNKLLSPNKKQRKNHTSKLQELALLLPIALKTGTKKLTKKEILVHVLQYIQYL. The helix-loop-helix motif stretch occupies residues 76–116; sequence KNHTSKLQELALLLPIALKTGTKKLTKKEILVHVLQYIQYL. Low complexity predominate over residues 157-167; that stretch reads TPSSSPSSQKS. Residues 182–191 show a composition bias toward polar residues; that stretch reads TQASESQTRT. Over residues 412 to 430 the composition is skewed to basic and acidic residues; sequence PQEKDTASKAPKDPPESHS. Residues 453–465 are compositionally biased toward low complexity; that stretch reads SSSSSSSSSSSSS. Residues 528–537 show a composition bias toward basic residues; the sequence is KEKKKGPCPP. Positions 540–608 form a DNA-binding region, HMG box; that stretch reads KKKCVNGFIM…QHNRIVKQDG (69 aa).

In terms of assembly, interacts with STRA8.

Its subcellular location is the nucleus. Its function is as follows. Gatekeeper of meiotic initiation in both male and female germ cells. In complex with STRA8, directly activates the transcription of a subset of critical meiotic genes playing a central role in cell-cycle switching from mitosis to meiosis. Temporal expression of MEIOSIN is required for meiotic entry decision. The sequence is that of Meiosis initiator protein from Homo sapiens (Human).